We begin with the raw amino-acid sequence, 67 residues long: Penaeidin-4a (67 aa).

Residues 1–19 (MRLVVCLVFLASFALVCQG) form the signal peptide. 3 disulfides stabilise this stretch: Cys-42–Cys-56, Cys-45–Cys-63, and Cys-57–Cys-64. The residue at position 66 (Arg-66) is an Arginine amide.

Belongs to the penaeidin family.

It is found in the cytoplasmic granule. Antibacterial and antifungal activity. Presents chitin-binding activity. The sequence is that of Penaeidin-4a from Penaeus vannamei (Whiteleg shrimp).